A 33-amino-acid chain; its full sequence is Brevinin-2Rk (33 aa).

The cysteines at positions 27 and 33 are disulfide-linked.

In terms of tissue distribution, expressed by the skin glands.

It is found in the secreted. In terms of biological role, antimicrobial peptide. The protein is Brevinin-2Rk of Pelophylax ridibundus (Marsh frog).